The following is a 497-amino-acid chain: Catalase-2 (497 aa).

Active-site residues include histidine 71 and asparagine 144. Heme is bound at residue tyrosine 354.

It belongs to the catalase family. The cofactor is heme.

The catalysed reaction is 2 H2O2 = O2 + 2 H2O. In terms of biological role, catalase involved in the oxidative stress response serving to protect cells from toxicity. For instance plays a role in defending against oxidative damage induced by excessive copper stress. Not required for maintaining normal lifespan. This is Catalase-2 from Caenorhabditis elegans.